A 178-amino-acid polypeptide reads, in one-letter code: Ribonuclease M5 (178 aa).

Residues D10–A103 enclose the Toprim domain. E16, D62, and D64 together coordinate Mg(2+).

Belongs to the ribonuclease M5 family. Mg(2+) serves as cofactor.

It is found in the cytoplasm. The catalysed reaction is Endonucleolytic cleavage of RNA, removing 21 and 42 nucleotides, respectively, from the 5'- and 3'-termini of a 5S-rRNA precursor.. In terms of biological role, required for correct processing of both the 5' and 3' ends of 5S rRNA precursor. Cleaves both sides of a double-stranded region yielding mature 5S rRNA in one step. The chain is Ribonuclease M5 from Mycoplasma pneumoniae (strain ATCC 29342 / M129 / Subtype 1) (Mycoplasmoides pneumoniae).